We begin with the raw amino-acid sequence, 288 residues long: Co-chaperone protein DjlA (288 aa).

The Periplasmic segment spans residues 1-6 (MEFIGK). Residues 7-30 (IIGVFLGWKVGGFFGAIAGLILGS) form a helical membrane-spanning segment. Residues 31 to 288 (IADKKLYELG…DLICKAKGWK (258 aa)) lie on the Cytoplasmic side of the membrane. The J domain maps to 222-288 (DAYKVLGVTE…DLICKAKGWK (67 aa)).

In terms of assembly, homodimer.

It localises to the cell inner membrane. Its function is as follows. Regulatory DnaK co-chaperone. Direct interaction between DnaK and DjlA is needed for the induction of the wcaABCDE operon, involved in the synthesis of a colanic acid polysaccharide capsule, possibly through activation of the RcsB/RcsC phosphotransfer signaling pathway. The colanic acid capsule may help the bacterium survive conditions outside the host. The protein is Co-chaperone protein DjlA of Haemophilus influenzae (strain ATCC 51907 / DSM 11121 / KW20 / Rd).